We begin with the raw amino-acid sequence, 362 residues long: Mitochondrial glycine transporter (362 aa).

3 Solcar repeats span residues 22 to 108 (PDAT…MRTS), 132 to 236 (LTAM…FKND), and 269 to 354 (RSSI…LIKS). Transmembrane regions (helical) follow at residues 28–53 (LLAGAIAGLVSAVTLQPFDLLKTRLQ), 83–109 (GTLPSTLRTSIGAGLYFTTLSKMRTSW), 138–163 (LTTGFIARGIVGYITMPITIIKTRFE), 211–234 (GSVATLARDCPYAGLYVLTYEAFK), 273–299 (INSTAAVLAASTCTTITAPFDAIKTRL), and 329–347 (GLSLRLGRKGISAGISWCI).

It belongs to the mitochondrial carrier (TC 2.A.29) family. SLC25A38 subfamily.

Its subcellular location is the mitochondrion inner membrane. The enzyme catalyses glycine(in) = glycine(out). Its function is as follows. Mitochondrial glycine transporter that imports glycine into the mitochondrial matrix. Plays an important role in providing glycine for the first enzymatic step in heme biosynthesis, the condensation of glycine with succinyl-CoA to produce 5-aminolevulinate (ALA) in the mitochondrial matrix. In Candida albicans (strain SC5314 / ATCC MYA-2876) (Yeast), this protein is Mitochondrial glycine transporter.